The primary structure comprises 1089 residues: Electroneutral sodium bicarbonate exchanger 1 (1089 aa).

The Extracellular segment spans residues 1–476 (MPAGSNEPDG…DYRDALSLQC (476 aa)). Positions 55–90 (LGRQSHRHHRTHGQKHRRRGGRGKGASQGEEGLEAL) are disordered. Residues 58–76 (QSHRHHRTHGQKHRRRGGR) show a composition bias toward basic residues. A helical transmembrane segment spans residues 477–497 (LASFLFLYCACMSPVITFGGL). The Cytoplasmic segment spans residues 498–505 (LGEATEGR). Residues 506–526 (ISAIESLFGASMTGIAYSLFA) form a helical membrane-spanning segment. At 527–563 (GQPLTILGSTGPVLVFEKILFKFCKDYALSYLSLRAL) the chain is on the extracellular side. The helical transmembrane segment at 564–584 (IGLWTAFLCIVLVATDASSLV) threads the bilayer. Topologically, residues 585–593 (CYITRFTEE) are cytoplasmic. The chain crosses the membrane as a helical span at residues 594 to 614 (AFASLICIIFIYEAIEKLIHL). At 615–685 (AETYPIHMHS…EFMGSACGHH (71 aa)) the chain is on the extracellular side. 2 disulfide bridges follow: C634-C682 and C636-C670. The N-linked (GlcNAc) asparagine glycan is linked to N644. A helical transmembrane segment spans residues 686–706 (GPYTPDVLFWSCILFFATFIV). Residues 707-729 (SSTLKTFKTSRYFPTRVRSMVSD) are Cytoplasmic-facing. The chain crosses the membrane as a helical span at residues 730–750 (FAVFLTIFTMVVLDFLIGVPS). Residues 751–776 (PKLQVPNVFKPTRDDRGWFINPIGPN) are Extracellular-facing. The helical transmembrane segment at 777–797 (PWWTVIAAIIPALLCTILIFM) threads the bilayer. Residues 798-822 (DQQITAVIINRKEHKLKKGCGYHLD) lie on the Cytoplasmic side of the membrane. The chain crosses the membrane as a helical span at residues 823 to 843 (LLMVAVMLGVCSIMGLPWFVA). Residues 844 to 879 (ATVLSITHVNSLKLESECSAPGEQPKFLGIREQRVT) lie on the Extracellular side of the membrane. Residues 880 to 900 (GLMIFVLMGCSVFMTAVLKFI) traverse the membrane as a helical segment. Residues 901-902 (PM) are Cytoplasmic-facing. A helical transmembrane segment spans residues 903–923 (PVLYGVFLYMGVSSLQGIQFF). Residues 924 to 960 (DRLKLFGMPAKHQPDFIYLRHVPLRKVHLFTLVQLTC) lie on the Extracellular side of the membrane. A helical membrane pass occupies residues 961 to 981 (LVLLWVIKASPAAIVFPMMVL). Topologically, residues 982–1089 (ALVFVRKVMD…GNTKEKSPFN (108 aa)) are cytoplasmic.

It belongs to the anion exchanger (TC 2.A.31) family. As to quaternary structure, homodimer. As to expression, expressed in the hippocampal neurons (at protein level). Highly expressed in brain with lower levels in lung, kidney and heart. In the kidney, there is high expression in the inner medulla, localized to the inner medullary collecting duct. In the brain, there seems to be three transcripts each having a different expression pattern. The smaller 3kb transcript has highest expression levels in the thalamus and the largest 9.5kb transcript has highest levels in the substantia nigra. The middle transcript of 4.4kb, which is also the main transcript in kidney, is highly expressed in thalamus. Hence, the highest levels are observed in the thalamus, amygdala and caudate nucleus and very low expression was seen in the corpus callosum.

It is found in the cell membrane. The protein localises to the apical cell membrane. The protein resides in the basolateral cell membrane. Its subcellular location is the cytoplasmic vesicle. It localises to the secretory vesicle. It is found in the synaptic vesicle membrane. The catalysed reaction is 2 hydrogencarbonate(out) + chloride(in) + Na(+)(out) = 2 hydrogencarbonate(in) + chloride(out) + Na(+)(in). Mediates electroneutral sodium- and carbonate-dependent chloride-HCO3(-) exchange with a Na(+):HCO3(-) stoichiometry of 2:1. Plays a major role in pH regulation in neurons. Mediates sodium reabsorption in the renal cortical collecting ducts. The polypeptide is Electroneutral sodium bicarbonate exchanger 1 (Mus musculus (Mouse)).